The sequence spans 552 residues: MLSDIEIAKQARLKDIRDIAKFLDIPEDMLKPYGRYIAKVDHRYLNTLNAKPNGKLILVTAITPTPAGEGKTTTSIGLSMALNRIGKKSIVTLREPSLGPVFGVKGGAAGGGYSQVLPMEDINLHFTGDIHAVTTAHNLIAAMIDAHINHGNELGIDLRKIYWKRAMDMNDRALREIVIALGGSANGYPREDGFLITAASEIMAVLCLAKDLTDLKRRIGEIVIAQGKNGLVRVKDIQAEGAAAALLKDAINPNLVQTIENTPAFVHGGPFANIAHGTNTLIATKLALKLSDYVVTEAGFAADLGAQKFLDFVAPTGGLFVDAVVIVASIRAMKYHGGVSKDNLNEENVDAVIKGLENLKVHIENMKKYGVPVVVALNRFSTDTEKEIEAVLKNSPAKCVLNEAYAKGSEGAIELAKAVVETIENVPSNYKPLVPSDLPVEQKIELIAKEIYRAGKVIYTDTAKSKLSMLKKNGFGNYPVIIAKTQNSISDDPKKINAPSGYEFTVRDFQISAGAGFVVALAGEIMLMPGLPKAPAAVNIDIDENGEITGLF.

65 to 72 (TPAGEGKT) is a binding site for ATP.

Belongs to the formate--tetrahydrofolate ligase family.

The catalysed reaction is (6S)-5,6,7,8-tetrahydrofolate + formate + ATP = (6R)-10-formyltetrahydrofolate + ADP + phosphate. The protein operates within one-carbon metabolism; tetrahydrofolate interconversion. The chain is Formate--tetrahydrofolate ligase from Fervidobacterium nodosum (strain ATCC 35602 / DSM 5306 / Rt17-B1).